Here is a 122-residue protein sequence, read N- to C-terminus: S-adenosylmethionine decarboxylase proenzyme (122 aa).

The active-site Schiff-base intermediate with substrate; via pyruvic acid is the Ser69. The residue at position 69 (Ser69) is a Pyruvic acid (Ser); by autocatalysis. Catalysis depends on His74, which acts as the Proton acceptor; for processing activity. The active-site Proton donor; for catalytic activity is the Cys89.

The protein belongs to the prokaryotic AdoMetDC family. Type 1 subfamily. In terms of assembly, heterotetramer of two alpha and two beta chains arranged as a dimer of alpha/beta heterodimers. Pyruvate is required as a cofactor. Is synthesized initially as an inactive proenzyme. Formation of the active enzyme involves a self-maturation process in which the active site pyruvoyl group is generated from an internal serine residue via an autocatalytic post-translational modification. Two non-identical subunits are generated from the proenzyme in this reaction, and the pyruvate is formed at the N-terminus of the alpha chain, which is derived from the carboxyl end of the proenzyme. The post-translation cleavage follows an unusual pathway, termed non-hydrolytic serinolysis, in which the side chain hydroxyl group of the serine supplies its oxygen atom to form the C-terminus of the beta chain, while the remainder of the serine residue undergoes an oxidative deamination to produce ammonia and the pyruvoyl group blocking the N-terminus of the alpha chain.

It carries out the reaction S-adenosyl-L-methionine + H(+) = S-adenosyl 3-(methylsulfanyl)propylamine + CO2. It participates in amine and polyamine biosynthesis; S-adenosylmethioninamine biosynthesis; S-adenosylmethioninamine from S-adenosyl-L-methionine: step 1/1. Catalyzes the decarboxylation of S-adenosylmethionine to S-adenosylmethioninamine (dcAdoMet), the propylamine donor required for the synthesis of the polyamines spermine and spermidine from the diamine putrescine. The sequence is that of S-adenosylmethionine decarboxylase proenzyme from Sulfurisphaera tokodaii (strain DSM 16993 / JCM 10545 / NBRC 100140 / 7) (Sulfolobus tokodaii).